The following is an 86-amino-acid chain: Large ribosomal subunit protein eL30 (86 aa).

Belongs to the eukaryotic ribosomal protein eL30 family.

The chain is Large ribosomal subunit protein eL30 (rpl30e) from Archaeoglobus fulgidus (strain ATCC 49558 / DSM 4304 / JCM 9628 / NBRC 100126 / VC-16).